Here is a 240-residue protein sequence, read N- to C-terminus: tRNA pseudouridine synthase A (240 aa).

Residue Asp-50 is the Nucleophile of the active site. Tyr-109 contributes to the substrate binding site.

The protein belongs to the tRNA pseudouridine synthase TruA family. Homodimer.

It catalyses the reaction uridine(38/39/40) in tRNA = pseudouridine(38/39/40) in tRNA. Its function is as follows. Formation of pseudouridine at positions 38, 39 and 40 in the anticodon stem and loop of transfer RNAs. In Campylobacter jejuni (strain RM1221), this protein is tRNA pseudouridine synthase A.